An 870-amino-acid polypeptide reads, in one-letter code: Increased rDNA silencing protein 4 (870 aa).

Residues 1 to 11 (MHMRLNKRRRN) are compositionally biased toward basic residues. Disordered regions lie at residues 1-25 (MHMR…QDAK), 38-57 (RHAD…DSAG), 62-92 (QADT…MHKV), 147-260 (IRTT…PSNM), 275-315 (GRKN…PSPI), 516-579 (YLGN…SSSY), and 717-738 (DDSA…LSDG). Polar residues predominate over residues 75 to 86 (PSGTSSSHNSGN). Over residues 155-166 (QDKKRRDIENAH) the composition is skewed to basic and acidic residues. Residues 167–181 (HAASAAAVTSSNLAV) show a composition bias toward low complexity. Residues 184-208 (PPSQYIPSVPTLNVTSPQMRNSSQN) are compositionally biased toward polar residues. Basic and acidic residues predominate over residues 209–227 (IDRRSKSNEEAHNGHEKMM). Residues 228-237 (NSRSNSINSS) show a composition bias toward low complexity. Over residues 238 to 259 (TIKGSVSEPNTVTPLRQNSPSN) the composition is skewed to polar residues. Residues 299–310 (RPMRTPSGRRVR) are compositionally biased toward basic residues. Residues 532 to 548 (IDDDDDDDDYDSAYEDL) show a composition bias toward acidic residues. Over residues 549–566 (DYSRDDSEAMYKGDRESS) the composition is skewed to basic and acidic residues. Low complexity-rich tracts occupy residues 567–579 (NPRS…SSSY) and 720–730 (ASNLNSNASTN). Residues 739–828 (DNEEDDVTRF…PKIWDSVDRW (90 aa)) form the EH domain.

Belongs to the IRS4 family.

In terms of biological role, positive regulator of phosphatidylinositol 4,5-bisphosphate turnover and negatively regulates signaling through the cell integrity pathway. Involved in rDNA silencing. The polypeptide is Increased rDNA silencing protein 4 (IRS4) (Candida glabrata (strain ATCC 2001 / BCRC 20586 / JCM 3761 / NBRC 0622 / NRRL Y-65 / CBS 138) (Yeast)).